A 146-amino-acid chain; its full sequence is Minor capsid protein P5 (146 aa).

Interacts with the major capsid protein.

The protein resides in the virion. One of the minor capsid proteins that constitute a network internal to the major capsid proteins and outside the lipid membrane. The minor capsid proteins glue and stabilize the capsomers. This is Minor capsid protein P5 from Paramecium bursaria Chlorella virus 1 (PBCV-1).